A 400-amino-acid polypeptide reads, in one-letter code: Enoyl-[acyl-carrier-protein] reductase [NADH] (400 aa).

Residues 48–53 (GSSSGY), 74–75 (FE), 111–112 (DA), and 139–140 (LA) contribute to the NAD(+) site. A substrate-binding site is contributed by tyrosine 225. The active-site Proton donor is the tyrosine 235. Residues lysine 244 and 273-275 (VVT) contribute to the NAD(+) site.

The protein belongs to the TER reductase family. As to quaternary structure, monomer.

It carries out the reaction a 2,3-saturated acyl-[ACP] + NAD(+) = a (2E)-enoyl-[ACP] + NADH + H(+). The protein operates within lipid metabolism; fatty acid biosynthesis. Its function is as follows. Involved in the final reduction of the elongation cycle of fatty acid synthesis (FAS II). Catalyzes the reduction of a carbon-carbon double bond in an enoyl moiety that is covalently linked to an acyl carrier protein (ACP). This chain is Enoyl-[acyl-carrier-protein] reductase [NADH], found in Shewanella pealeana (strain ATCC 700345 / ANG-SQ1).